We begin with the raw amino-acid sequence, 119 residues long: U-scoloptoxin(01)-Er1a (119 aa).

The first 22 residues, 1–22 (MEIHSNIILLLLIALFAIFVKM), serve as a signal peptide directing secretion. Positions 39 to 97 (NFACSGKKPGFYADEGFDCQVYHMCSPEGQLTTYLCGPGTIFNQKKLVCDLPTNYNCAD) constitute a Chitin-binding type-2 domain. A disulfide bond links Cys74 and Cys87.

The protein belongs to the scoloptoxin-01 family. In terms of processing, contains 3 disulfide bonds. In terms of tissue distribution, expressed by the venom gland.

It is found in the secreted. In Ethmostigmus rubripes (Giant centipede), this protein is U-scoloptoxin(01)-Er1a.